We begin with the raw amino-acid sequence, 277 residues long: Large ribosomal subunit protein uL2c (277 aa).

The interval 225 to 277 (MNPCDHPHGGGEGRSPIGRPKPVTPWGKPALGKKTRSPKRFSNKYIIRSRKMV) is disordered. Basic residues predominate over residues 255–277 (LGKKTRSPKRFSNKYIIRSRKMV).

It belongs to the universal ribosomal protein uL2 family. Part of the 50S ribosomal subunit.

It is found in the plastid. The protein localises to the chloroplast. The chain is Large ribosomal subunit protein uL2c (rpl2) from Euglena gracilis.